The primary structure comprises 750 residues: Photosystem I P700 chlorophyll a apoprotein A1 (750 aa).

8 helical membrane-spanning segments follow: residues 70 to 93 (VFSA…FHGA), 156 to 179 (LYCT…FHYH), 195 to 219 (LNHH…HVSL), 291 to 309 (IAHH…GHMY), 346 to 369 (WHAQ…HHMY), 385 to 411 (LSLF…IFMV), 433 to 455 (AIIS…LYIH), and 531 to 549 (FLVH…LILL). The [4Fe-4S] cluster site is built by Cys-573 and Cys-582. 2 consecutive transmembrane segments (helical) span residues 589–610 (HVFL…HFSW) and 664–686 (LSAY…MFLF). His-675 is a chlorophyll a' binding site. Chlorophyll a is bound by residues Met-683 and Tyr-691. Trp-692 lines the phylloquinone pocket. Residues 724 to 744 (AVGVTHYLLGGIATTWAFFLA) form a helical membrane-spanning segment.

This sequence belongs to the PsaA/PsaB family. In terms of assembly, the PsaA/B heterodimer binds the P700 chlorophyll special pair and subsequent electron acceptors. PSI consists of a core antenna complex that captures photons, and an electron transfer chain that converts photonic excitation into a charge separation. The eukaryotic PSI reaction center is composed of at least 11 subunits. It depends on P700 is a chlorophyll a/chlorophyll a' dimer, A0 is one or more chlorophyll a, A1 is one or both phylloquinones and FX is a shared 4Fe-4S iron-sulfur center. as a cofactor.

The protein localises to the plastid. Its subcellular location is the chloroplast thylakoid membrane. The catalysed reaction is reduced [plastocyanin] + hnu + oxidized [2Fe-2S]-[ferredoxin] = oxidized [plastocyanin] + reduced [2Fe-2S]-[ferredoxin]. Functionally, psaA and PsaB bind P700, the primary electron donor of photosystem I (PSI), as well as the electron acceptors A0, A1 and FX. PSI is a plastocyanin-ferredoxin oxidoreductase, converting photonic excitation into a charge separation, which transfers an electron from the donor P700 chlorophyll pair to the spectroscopically characterized acceptors A0, A1, FX, FA and FB in turn. Oxidized P700 is reduced on the lumenal side of the thylakoid membrane by plastocyanin. The chain is Photosystem I P700 chlorophyll a apoprotein A1 from Vitis vinifera (Grape).